A 102-amino-acid polypeptide reads, in one-letter code: RNA-binding protein Hfq (102 aa).

In terms of domain architecture, Sm spans 9–68 (DPFLNALRRERVPVSIYLVNGIKLQGQIESFDQFVILLKNTVSQMVYKHAISTVVPSRPV). Residues 63–102 (VPSRPVSHHSNNTGGGSNNYHHGSSPAPSSQPQQDSADAE) are disordered. Residues 70–102 (HHSNNTGGGSNNYHHGSSPAPSSQPQQDSADAE) are compositionally biased toward low complexity.

This sequence belongs to the Hfq family. Homohexamer.

In terms of biological role, RNA chaperone that binds small regulatory RNA (sRNAs) and mRNAs to facilitate mRNA translational regulation in response to envelope stress, environmental stress and changes in metabolite concentrations. Also binds with high specificity to tRNAs. This is RNA-binding protein Hfq from Erwinia tasmaniensis (strain DSM 17950 / CFBP 7177 / CIP 109463 / NCPPB 4357 / Et1/99).